A 506-amino-acid polypeptide reads, in one-letter code: NADH-quinone oxidoreductase subunit N 2 (506 aa).

14 consecutive transmembrane segments (helical) span residues 11-31 (SLAYFAPELVLIAAALLLVVW), 44-64 (LVILSLAALACSGGLGAYFLA), 82-102 (FSNLFRVIFALVTGAIVLFLV), 117-137 (SGELFTLILVLSLGMNLMAAS), 140-160 (LLLIYLSLELVSVISFVLAGF), 175-195 (VIFGGVASGIMLYGMSWIFGI), 222-242 (VFVGTAFMLAGFGYKISAAPF), 254-274 (PTPVTAFLSVGPKAAGFAVLI), 289-309 (GVATPWPVLFGCLAMATMTVG), 323-345 (LAYSSIAHAGYMLLGFSVFSGAG), 356-376 (YCFMNLGAFMVVMAVAEESGG), 394-414 (AAAMAVFLVSLTGLPPTAGFI), 419-439 (LFSALLAAGGAWSWVIAVVGV), and 472-492 (LLGGTACALAIPTVLLGVYWG).

It belongs to the complex I subunit 2 family. As to quaternary structure, NDH-1 is composed of 14 different subunits. Subunits NuoA, H, J, K, L, M, N constitute the membrane sector of the complex.

It localises to the cell inner membrane. The enzyme catalyses a quinone + NADH + 5 H(+)(in) = a quinol + NAD(+) + 4 H(+)(out). In terms of biological role, NDH-1 shuttles electrons from NADH, via FMN and iron-sulfur (Fe-S) centers, to quinones in the respiratory chain. The immediate electron acceptor for the enzyme in this species is believed to be ubiquinone. Couples the redox reaction to proton translocation (for every two electrons transferred, four hydrogen ions are translocated across the cytoplasmic membrane), and thus conserves the redox energy in a proton gradient. This chain is NADH-quinone oxidoreductase subunit N 2, found in Sorangium cellulosum (strain So ce56) (Polyangium cellulosum (strain So ce56)).